The chain runs to 518 residues: Membrane-bound lytic murein transglycosylase F (518 aa).

The signal sequence occupies residues 1-21; the sequence is MKKLKINYLFIGILALLLAVA. Residues 22–269 are non-LT domain; that stretch reads LWPSIPWFGK…RIEEKYLGHG (248 aa). Residues 270 to 518 form an LT domain region; it reads DDFDYVDTRT…SRKGSEEKQN (249 aa). The active site involves glutamate 314.

It in the N-terminal section; belongs to the bacterial solute-binding protein 3 family. This sequence in the C-terminal section; belongs to the transglycosylase Slt family.

The protein resides in the cell outer membrane. It carries out the reaction Exolytic cleavage of the (1-&gt;4)-beta-glycosidic linkage between N-acetylmuramic acid (MurNAc) and N-acetylglucosamine (GlcNAc) residues in peptidoglycan, from either the reducing or the non-reducing ends of the peptidoglycan chains, with concomitant formation of a 1,6-anhydrobond in the MurNAc residue.. Functionally, murein-degrading enzyme that degrades murein glycan strands and insoluble, high-molecular weight murein sacculi, with the concomitant formation of a 1,6-anhydromuramoyl product. Lytic transglycosylases (LTs) play an integral role in the metabolism of the peptidoglycan (PG) sacculus. Their lytic action creates space within the PG sacculus to allow for its expansion as well as for the insertion of various structures such as secretion systems and flagella. This is Membrane-bound lytic murein transglycosylase F from Escherichia coli (strain ATCC 8739 / DSM 1576 / NBRC 3972 / NCIMB 8545 / WDCM 00012 / Crooks).